A 77-amino-acid polypeptide reads, in one-letter code: Large ribosomal subunit protein uL29 (77 aa).

The protein belongs to the universal ribosomal protein uL29 family.

The chain is Large ribosomal subunit protein uL29 (rpmC) from Mycobacterium bovis (strain ATCC BAA-935 / AF2122/97).